We begin with the raw amino-acid sequence, 309 residues long: Syndecan-1 (309 aa).

Positions 1 to 22 (MRRAALWLWLCALALRLQPVLP) are cleaved as a signal peptide. Residues 23–253 (QIVTVNVPPE…GLLDRKEVLG (231 aa)) are Extracellular-facing. 2 disordered regions span residues 28–57 (NVPPEDQDGSGDDSDNFSGSGTGALPDITL) and 145–185 (TTAQ…GGTS). The span at 32–42 (EDQDGSGDDSD) shows a compositional bias: acidic residues. Ser-37 carries O-linked (Xyl...) (chondroitin sulfate) serine glycosylation. Asn-43 carries an N-linked (GlcNAc...) asparagine glycan. Ser-45 and Ser-47 each carry an O-linked (Xyl...) (heparan sulfate) serine glycan. Positions 173 to 183 (GQPDQQPPSGG) are enriched in low complexity. Residues Ser-205 and Ser-215 are each glycosylated (O-linked (Xyl...) (chondroitin sulfate) serine). A helical transmembrane segment spans residues 254 to 274 (GVIAGGLVGLIFAVCLVGFML). Residues 275-309 (YRMKKKDEGSYSLEEPKQANGGAYQKPTKQEEFYA) are Cytoplasmic-facing. Residues 283 to 309 (GSYSLEEPKQANGGAYQKPTKQEEFYA) are disordered. A Phosphoserine modification is found at Ser-284.

The protein belongs to the syndecan proteoglycan family. Interacts with CDCP1. Interacts (via C-terminus) with TIAM1 (via PDZ domain). Interacts with MDK. Post-translationally, shedding is enhanced by a number of factors such as heparanase, thrombin or EGF. Also by stress and wound healing. PMA-mediated shedding is inhibited by TIMP3.

Its subcellular location is the membrane. The protein resides in the secreted. It localises to the extracellular exosome. Its function is as follows. Cell surface proteoglycan that contains both heparan sulfate and chondroitin sulfate and that links the cytoskeleton to the interstitial matrix. Regulates exosome biogenesis in concert with SDCBP and PDCD6IP. Able to induce its own expression in dental mesenchymal cells and also in the neighboring dental epithelial cells via an MSX1-mediated pathway. The polypeptide is Syndecan-1 (Mesocricetus auratus (Golden hamster)).